The following is a 24-amino-acid chain: Coenzyme PQQ synthesis protein A (24 aa).

Residues 16–20 constitute a cross-link (pyrroloquinoline quinone (Glu-Tyr)); that stretch reads EVTMY.

This sequence belongs to the PqqA family.

It participates in cofactor biosynthesis; pyrroloquinoline quinone biosynthesis. Functionally, required for coenzyme pyrroloquinoline quinone (PQQ) biosynthesis. PQQ is probably formed by cross-linking a specific glutamate to a specific tyrosine residue and excising these residues from the peptide. The protein is Coenzyme PQQ synthesis protein A of Acinetobacter baumannii (strain SDF).